Reading from the N-terminus, the 278-residue chain is Potassium/proton antiporter CemA (278 aa).

4 helical membrane passes run 60 to 80, 163 to 183, 201 to 221, and 239 to 259; these read YLVL…SLVF, ILAF…IAVL, FLII…GWEV, and IFLF…YWIF.

It belongs to the CemA family.

It localises to the plastid. The protein localises to the chloroplast inner membrane. It carries out the reaction K(+)(in) + H(+)(out) = K(+)(out) + H(+)(in). Contributes to K(+)/H(+) antiport activity by supporting proton efflux to control proton extrusion and homeostasis in chloroplasts in a light-dependent manner to modulate photosynthesis. Prevents excessive induction of non-photochemical quenching (NPQ) under continuous-light conditions. Indirectly promotes efficient inorganic carbon uptake into chloroplasts. The protein is Potassium/proton antiporter CemA of Guillardia theta (Cryptophyte).